We begin with the raw amino-acid sequence, 806 residues long: Volume-regulated anion channel subunit LRRC8E (806 aa).

Residues 1-22 (MIPVAEFKQFTEQQPAFKVLKP) lie on the Cytoplasmic side of the membrane. Residues 23–43 (WWDVLAEYITYAMLMIGVFGC) traverse the membrane as a helical segment. Over 44–130 (TLQVTQDKII…YETALHWYAK (87 aa)) the chain is Extracellular. C54 and C311 are oxidised to a cystine. 2 N-linked (GlcNAc...) asparagine glycosylation sites follow: N57 and N80. The segment covering 72–81 (YDQQSPPSND) has biased composition (polar residues). The segment at 72–103 (YDQQSPPSNDSDLETTIPPPTATSSPPREMSG) is disordered. Residues 131 to 151 (YFPYLVVIHTLIFIICGNFWF) traverse the membrane as a helical segment. The Cytoplasmic portion of the chain corresponds to 152–275 (KFPGTSSKIE…MRQTVLKVCK (124 aa)). Residues 182-213 (EVSGESSQEKPSQERSIDRELSKPNFEEGSPA) form a disordered region. A compositionally biased stretch (basic and acidic residues) spans 188-207 (SQEKPSQERSIDRELSKPNF). The chain crosses the membrane as a helical span at residues 276 to 296 (FVLITIYNAVLVGKIHFIVPC). Residues 297-323 (SVHTEDMTGYNSFCCNHTKAHLFSKLA) are Extracellular-facing. N-linked (GlcNAc...) asparagine glycosylation is present at N312. The chain crosses the membrane as a helical span at residues 324 to 344 (ITYLCFLGVYGLTCLYTLYWL). Over 345–806 (FRRPLKEYSF…VEVRDKLKED (462 aa)) the chain is Cytoplasmic. 10 LRR repeats span residues 544–566 (LKSLKVLTIKSNLSKIPATVADV), 569–589 (HLQKFSIHNDGTKLLTLNALK), 593–614 (LVKELELVRCELERIPHAVFSL), 616–637 (NLQVLDLKENTLHTIEEIISLQ), 641–662 (KLSVLRLWHNQIAYIPEHIRKL), 664–685 (GLEELSLNRNKILVIPSQLFLC), 687–708 (KLRHLDLSNNEIRELPPEIGVL), 710–731 (LLQYLGLSGNFLEDLPNELFFC), 733–754 (KLKTLKLGQNRLGNLSPKVGSL), and 756–777 (CLVKLELKGNRMDTLPPELGNC).

The protein belongs to the LRRC8 family. As to quaternary structure, heterohexamer; oligomerizes with other LRRC8 proteins (lrrc8a, lrrc8c, lrrc8d and/or lrrc8b) to form a heterohexamer. Detected in a channel complex that contains lrrc8a, lrrc8c and lrrc8e. In vivo, the subunit composition may depend primarily on expression levels, and heterooligomeric channels containing various proportions of the different LRRC8 proteins may coexist.

It is found in the cell membrane. It localises to the endoplasmic reticulum membrane. The protein localises to the lysosome membrane. The enzyme catalyses chloride(in) = chloride(out). It carries out the reaction iodide(out) = iodide(in). It catalyses the reaction taurine(out) = taurine(in). The catalysed reaction is 2',3'-cGAMP(out) = 2',3'-cGAMP(in). Functionally, non-essential component of the volume-regulated anion channel (VRAC, also named VSOAC channel), an anion channel required to maintain a constant cell volume in response to extracellular or intracellular osmotic changes. The VRAC channel conducts iodide better than chloride and can also conduct organic osmolytes like taurine. Mediates efflux of amino acids, such as aspartate, in response to osmotic stress. The VRAC channel also mediates transport of immunoreactive cyclic dinucleotide GMP-AMP (2'-3'-cGAMP), an immune messenger produced in response to DNA virus in the cytosol. Channel activity requires lrrc8a plus at least one other family member (lrrc8b, lrrc8c, lrrc8d or lrrc8e); channel characteristics depend on the precise subunit composition. Also plays a role in lysosome homeostasis by forming functional lysosomal VRAC channels in response to low cytoplasmic ionic strength condition: lysosomal VRAC channels are necessary for the formation of large lysosome-derived vacuoles, which store and then expel excess water to maintain cytosolic water homeostasis. This Xenopus tropicalis (Western clawed frog) protein is Volume-regulated anion channel subunit LRRC8E.